The primary structure comprises 598 residues: Probable translation initiation factor IF-2 (598 aa).

One can recognise a tr-type G domain in the interval L3 to K225. The segment at G12–T19 is G1. G12–T19 contacts GTP. A G2 region spans residues G37–H41. The segment at D76–G79 is G3. GTP is bound by residues D76–H80 and N130–D133. Residues N130 to D133 form a G4 region. The G5 stretch occupies residues S200–M202.

It belongs to the TRAFAC class translation factor GTPase superfamily. Classic translation factor GTPase family. IF-2 subfamily.

Function in general translation initiation by promoting the binding of the formylmethionine-tRNA to ribosomes. Seems to function along with eIF-2. The sequence is that of Probable translation initiation factor IF-2 from Methanococcus maripaludis (strain C7 / ATCC BAA-1331).